Here is a 90-residue protein sequence, read N- to C-terminus: Small ribosomal subunit protein bS20 (90 aa).

This sequence belongs to the bacterial ribosomal protein bS20 family.

Functionally, binds directly to 16S ribosomal RNA. This is Small ribosomal subunit protein bS20 from Nautilia profundicola (strain ATCC BAA-1463 / DSM 18972 / AmH).